The chain runs to 332 residues: Ketol-acid reductoisomerase (NADP(+)) (332 aa).

The KARI N-terminal Rossmann domain maps to 1 to 182; sequence MAVIYYDKDC…GSNRAGVLET (182 aa). NADP(+) contacts are provided by residues 25-28 and 83-86; these read YGAQ and DTSQ. The active site involves His108. Gly134 is a binding site for NADP(+). Residues 183-328 form the KARI C-terminal knotted domain; sequence TFAEETETDL…AELRSMMSWL (146 aa). Positions 191, 195, 227, and 231 each coordinate Mg(2+). Ser252 is a binding site for substrate.

This sequence belongs to the ketol-acid reductoisomerase family. Mg(2+) serves as cofactor.

The enzyme catalyses (2R)-2,3-dihydroxy-3-methylbutanoate + NADP(+) = (2S)-2-acetolactate + NADPH + H(+). It carries out the reaction (2R,3R)-2,3-dihydroxy-3-methylpentanoate + NADP(+) = (S)-2-ethyl-2-hydroxy-3-oxobutanoate + NADPH + H(+). Its pathway is amino-acid biosynthesis; L-isoleucine biosynthesis; L-isoleucine from 2-oxobutanoate: step 2/4. It participates in amino-acid biosynthesis; L-valine biosynthesis; L-valine from pyruvate: step 2/4. Its function is as follows. Involved in the biosynthesis of branched-chain amino acids (BCAA). Catalyzes an alkyl-migration followed by a ketol-acid reduction of (S)-2-acetolactate (S2AL) to yield (R)-2,3-dihydroxy-isovalerate. In the isomerase reaction, S2AL is rearranged via a Mg-dependent methyl migration to produce 3-hydroxy-3-methyl-2-ketobutyrate (HMKB). In the reductase reaction, this 2-ketoacid undergoes a metal-dependent reduction by NADPH to yield (R)-2,3-dihydroxy-isovalerate. This is Ketol-acid reductoisomerase (NADP(+)) from Dehalococcoides mccartyi (strain ATCC BAA-2266 / KCTC 15142 / 195) (Dehalococcoides ethenogenes (strain 195)).